The sequence spans 414 residues: Dual-specificity RNA methyltransferase RlmN (414 aa).

A compositionally biased stretch (low complexity) spans 1–20; that stretch reads MMSTPETATEATAPEAAPAP. Residues 1–24 form a disordered region; the sequence is MMSTPETATEATAPEAAPAPSLGA. Glu-129 acts as the Proton acceptor in catalysis. In terms of domain architecture, Radical SAM core spans 135–385; sequence ESDRGTLCVS…VRTPRGRDIL (251 aa). Cys-142 and Cys-388 form a disulfide bridge. [4Fe-4S] cluster is bound by residues Cys-149, Cys-153, and Cys-156. Residues 214 to 215, Ser-246, 268 to 270, and Asn-345 contribute to the S-adenosyl-L-methionine site; these read GE and SLH. Residue Cys-388 is the S-methylcysteine intermediate of the active site.

It belongs to the radical SAM superfamily. RlmN family. Requires [4Fe-4S] cluster as cofactor.

The protein resides in the cytoplasm. It catalyses the reaction adenosine(2503) in 23S rRNA + 2 reduced [2Fe-2S]-[ferredoxin] + 2 S-adenosyl-L-methionine = 2-methyladenosine(2503) in 23S rRNA + 5'-deoxyadenosine + L-methionine + 2 oxidized [2Fe-2S]-[ferredoxin] + S-adenosyl-L-homocysteine. The catalysed reaction is adenosine(37) in tRNA + 2 reduced [2Fe-2S]-[ferredoxin] + 2 S-adenosyl-L-methionine = 2-methyladenosine(37) in tRNA + 5'-deoxyadenosine + L-methionine + 2 oxidized [2Fe-2S]-[ferredoxin] + S-adenosyl-L-homocysteine. Functionally, specifically methylates position 2 of adenine 2503 in 23S rRNA and position 2 of adenine 37 in tRNAs. m2A2503 modification seems to play a crucial role in the proofreading step occurring at the peptidyl transferase center and thus would serve to optimize ribosomal fidelity. This chain is Dual-specificity RNA methyltransferase RlmN, found in Xanthobacter autotrophicus (strain ATCC BAA-1158 / Py2).